A 201-amino-acid polypeptide reads, in one-letter code: Alpha-1-acid glycoprotein (201 aa).

An N-terminal signal peptide occupies residues 1–18 (MALPWALAVLSLLPLLHA). 6 N-linked (GlcNAc...) asparagine glycosylation sites follow: Asn-25, Asn-33, Asn-87, Asn-93, Asn-103, and Asn-169. An intrachain disulfide couples Cys-90 to Cys-183.

This sequence belongs to the calycin superfamily. Lipocalin family.

Its subcellular location is the secreted. Functionally, functions as a transport protein in the blood stream. Binds various ligands in the interior of its beta-barrel domain. Appears to function in modulating the activity of the immune system during the acute-phase reaction. This Oryctolagus cuniculus (Rabbit) protein is Alpha-1-acid glycoprotein (ORM1).